Here is a 214-residue protein sequence, read N- to C-terminus: Adenylate kinase (214 aa).

10 to 15 (GAGKGT) lines the ATP pocket. The tract at residues 30 to 59 (STGDMFRAAIKEGTELGKQAKALMDEGKLV) is NMP. AMP is bound by residues Thr-31, Arg-36, 57–59 (KLV), 85–88 (GFPR), and Gln-92. The interval 122 to 159 (GRRVHQPSGRTYHVVYNPPKVEGKDDVTGEDLIIRQDD) is LID. ATP contacts are provided by residues Arg-123 and 132–133 (TY). AMP contacts are provided by Arg-156 and Arg-167. Residue Lys-200 participates in ATP binding.

It belongs to the adenylate kinase family. In terms of assembly, monomer.

It is found in the cytoplasm. The enzyme catalyses AMP + ATP = 2 ADP. Its pathway is purine metabolism; AMP biosynthesis via salvage pathway; AMP from ADP: step 1/1. Catalyzes the reversible transfer of the terminal phosphate group between ATP and AMP. Plays an important role in cellular energy homeostasis and in adenine nucleotide metabolism. This Actinobacillus pleuropneumoniae serotype 5b (strain L20) protein is Adenylate kinase.